A 147-amino-acid polypeptide reads, in one-letter code: Cyanate hydratase (147 aa).

Residues Arg-88, Glu-91, and Ser-114 contribute to the active site.

Belongs to the cyanase family.

It catalyses the reaction cyanate + hydrogencarbonate + 3 H(+) = NH4(+) + 2 CO2. Catalyzes the reaction of cyanate with bicarbonate to produce ammonia and carbon dioxide. This Methylibium petroleiphilum (strain ATCC BAA-1232 / LMG 22953 / PM1) protein is Cyanate hydratase.